A 259-amino-acid chain; its full sequence is MSAISIQSVTKRFPNGFEALKGIDTEIQTGSFTVVLGPSGAGKSTLLRLMNGLETPTTGAVRIDGETVDGHRLRHIRSKVAMVFQQFNLVERLSVVTNVLTGRLAQRSWVGSVFYLFRQEDLGIAREALARVGLTDKAWSRADKLSGGQQQRVGIARALAQRPKVILADEPVASLDPVSSEEIMALLREICDRDGITVVVNLHQVDLAKRFADRIIGMNAGRVVFDGTPAELSAQALRTIYQREGIEDDTSLDLALAYA.

The region spanning 4–245 is the ABC transporter domain; that stretch reads ISIQSVTKRF…ALRTIYQREG (242 aa). Position 37–44 (37–44) interacts with ATP; it reads GPSGAGKS.

The protein belongs to the ABC transporter superfamily. Phosphonates importer (TC 3.A.1.9.1) family. In terms of assembly, the complex is composed of two ATP-binding proteins (PhnC), two transmembrane proteins (PhnE) and a solute-binding protein (PhnD).

Its subcellular location is the cell inner membrane. It catalyses the reaction phosphonate(out) + ATP + H2O = phosphonate(in) + ADP + phosphate + H(+). Part of the ABC transporter complex PhnCDE involved in phosphonates import. Responsible for energy coupling to the transport system. The polypeptide is Phosphonates import ATP-binding protein PhnC (Thiobacillus denitrificans (strain ATCC 25259 / T1)).